The chain runs to 123 residues: Crossover junction endodeoxyribonuclease Hjc (123 aa).

Glutamate 9 lines the Mg(2+) pocket. Serine 29 is an active-site residue. Residues aspartate 33 and glutamate 46 each contribute to the Mg(2+) site.

This sequence belongs to the Holliday junction resolvase Hjc family. In terms of assembly, homodimer. Probably interacts with PCNA and RadB. The cofactor is Mg(2+). It depends on Mn(2+) as a cofactor.

It catalyses the reaction Endonucleolytic cleavage at a junction such as a reciprocal single-stranded crossover between two homologous DNA duplexes (Holliday junction).. Cleavage inhibited by RadB in the absence (but not presence) of ATP. In terms of biological role, a structure-specific endonuclease that resolves Holliday junction (HJ) intermediates during genetic recombination. Cleaves 4-way DNA junctions introducing paired nicks in opposing strands, leaving a 5'-terminal phosphate and a 3'-terminal hydroxyl group that are subsequently ligated to produce recombinant products. Cleaves both mobile and immobile junctions. Binds 4-way junction DNA, a synthetic Hj, binding is not competed by dsDNA. This Pyrococcus furiosus (strain ATCC 43587 / DSM 3638 / JCM 8422 / Vc1) protein is Crossover junction endodeoxyribonuclease Hjc.